We begin with the raw amino-acid sequence, 199 residues long: Peptidyl-tRNA hydrolase (199 aa).

Position 15 (Tyr-15) interacts with tRNA. The Proton acceptor role is filled by His-20. 3 residues coordinate tRNA: Phe-66, Asn-68, and Asn-114.

This sequence belongs to the PTH family. In terms of assembly, monomer.

The protein resides in the cytoplasm. The catalysed reaction is an N-acyl-L-alpha-aminoacyl-tRNA + H2O = an N-acyl-L-amino acid + a tRNA + H(+). Its function is as follows. Hydrolyzes ribosome-free peptidyl-tRNAs (with 1 or more amino acids incorporated), which drop off the ribosome during protein synthesis, or as a result of ribosome stalling. Functionally, catalyzes the release of premature peptidyl moieties from peptidyl-tRNA molecules trapped in stalled 50S ribosomal subunits, and thus maintains levels of free tRNAs and 50S ribosomes. This Cupriavidus pinatubonensis (strain JMP 134 / LMG 1197) (Cupriavidus necator (strain JMP 134)) protein is Peptidyl-tRNA hydrolase.